Reading from the N-terminus, the 532-residue chain is RNA-directed RNA polymerase beta chain (532 aa).

The 131-residue stretch at Glu245 to Gly375 folds into the RdRp catalytic domain.

Part of the viral RNA-dependent RNA polymerase complex, the other subunits are probably the host ribosomal protein S1, EF-Tu and EF-Ts.

The catalysed reaction is RNA(n) + a ribonucleoside 5'-triphosphate = RNA(n+1) + diphosphate. Functionally, this is the catalytic subunit of the viral RNA-dependent RNA polymerase complex. This complex is involved in viral RNA replication that produces (+)-stranded genomes via a complementary, (-)-stranded intermediate. The polypeptide is RNA-directed RNA polymerase beta chain (Escherichia coli (Bacteriophage GA)).